The following is a 2497-amino-acid chain: Integrator complex subunit 1 homolog (2497 aa).

Residues 1 to 10 are compositionally biased toward basic residues; that stretch reads MMLNKIKRSK. Disordered regions lie at residues 1–151, 300–337, 946–965, 1028–1108, 1234–1292, and 1572–1604; these read MMLN…NNNI, QPQP…IKKS, QQQQ…QQPT, TTTT…TSSS, INNN…NQKS, and NNNN…NNIT. Composition is skewed to low complexity over residues 37–46, 60–151, 305–333, 946–963, and 1028–1058; these read SDNNNNNSND, NNSI…NNNI, QQQQ…QPQQ, QQQQ…QQQQ, and TTTT…SSSL. Over residues 1075–1091 the composition is skewed to polar residues; the sequence is SGLSGSSNGINQSSDSI. Composition is skewed to low complexity over residues 1097 to 1108, 1234 to 1265, 1272 to 1289, and 1572 to 1602; these read STSPTTTTTSSS, INNN…NINK, HSNS…NKNN, and NNNN…NNNN. A coiled-coil region spans residues 1645 to 1675; it reads RILKNTTQQKQQKQQQKESVQKSIQSLSKLI. Over residues 2084–2115 the composition is skewed to low complexity; sequence QQQQQQQQQQQQQQKQQSNNSNNINNNNNNNN. 2 disordered regions span residues 2084-2123 and 2329-2350; these read QQQQ…QKSK and NNNN…NNNN.

It belongs to the Integrator subunit 1 family. In terms of assembly, component of the Integrator complex. The core complex associates with protein phosphatase 2A subunits to form the Integrator-PP2A (INTAC) complex.

It localises to the nucleus. Component of the integrator complex, a multiprotein complex that terminates RNA polymerase II (Pol II) transcription in the promoter-proximal region of genes. The integrator complex provides a quality checkpoint during transcription elongation by driving premature transcription termination of transcripts that are unfavorably configured for transcriptional elongation: the complex terminates transcription by (1) catalyzing dephosphorylation of the C-terminal domain (CTD) of Pol II subunit polr2a, (2) degrading the exiting nascent RNA transcript via endonuclease activity and (3) promoting the release of Pol II from bound DNA. The integrator complex is also involved in terminating the synthesis of non-coding Pol II transcripts, such as enhancer RNAs (eRNAs), small nuclear RNAs (snRNAs), telomerase RNAs and long non-coding RNAs (lncRNAs). This Dictyostelium discoideum (Social amoeba) protein is Integrator complex subunit 1 homolog (ints1).